The sequence spans 108 residues: DNA-directed RNA polymerase subunit omega (108 aa).

This sequence belongs to the RNA polymerase subunit omega family. The RNAP catalytic core consists of 2 alpha, 1 beta, 1 beta' and 1 omega subunit. When a sigma factor is associated with the core the holoenzyme is formed, which can initiate transcription.

It carries out the reaction RNA(n) + a ribonucleoside 5'-triphosphate = RNA(n+1) + diphosphate. Functionally, promotes RNA polymerase assembly. Latches the N- and C-terminal regions of the beta' subunit thereby facilitating its interaction with the beta and alpha subunits. This is DNA-directed RNA polymerase subunit omega from Mycolicibacterium paratuberculosis (strain ATCC BAA-968 / K-10) (Mycobacterium paratuberculosis).